The following is a 140-amino-acid chain: Pro-vaccinia growth factor (140 aa).

A signal peptide spans 1–18 (MLINYLMLLFAAMIIRSF). Topologically, residues 19–100 (ADSGNAIETT…SEKPNTTTSY (82 aa)) are extracellular. The N-linked (GlcNAc...) asparagine; by host glycan is linked to N34. In terms of domain architecture, EGF-like spans 41-81 (AIRLCGPEGDGYCLHGDCIHARDIDGMYCRCSHGYTGIRCQ). 3 disulfide bridges follow: C45–C58, C53–C69, and C71–C80. The N-linked (GlcNAc...) asparagine; by host glycan is linked to N95. A helical membrane pass occupies residues 101–121 (IPSPGIMLVLVGIIIITCCLL). Topologically, residues 122–140 (SVYRFTRRTKLPLQDMVVP) are cytoplasmic.

This sequence belongs to the orthopoxvirus OPG019 family. As to quaternary structure, vaccinia growth factor interacts with host EGFR and promotes EGFR dimerization.

The protein localises to the host membrane. It is found in the secreted. Its function is as follows. Stimulates cellular proliferation (hyperplasia)and mobility around infected cells to promote rapid and efficient spread of infection. This effect is beneficial for virus replication in vivo, because poxviruses replicate possibly better in proliferating cells than in quiescent cells. Acts by binding host EGFR, inducing its dimerization, autophosphorylation and leading to activation of several cellular pathways regulating cell proliferation or cell survival. The activation by host EGFR of mitogen activated protein kinases (MAPK) and extracellular-signal regulated kinases (ERK) are essential for the positive effect of vaccinia growth factor on poxvirus virulence in vivo. This chain is Pro-vaccinia growth factor (OPG019), found in Homo sapiens (Human).